Consider the following 277-residue polypeptide: PTS system sorbose-specific EIIC component (277 aa).

5 helical membrane-spanning segments follow: residues 1 to 21 (MAIS…VGMG), 92 to 112 (IQKG…LTVL), 133 to 153 (FTAI…RVSI), 177 to 197 (VITG…YAMI), and 219 to 239 (YLKL…IVYV). The PTS EIIC type-4 domain occupies 3-237 (ISTIQIILIF…GAVGLIFAIV (235 aa)).

Its subcellular location is the cell membrane. In terms of biological role, the phosphoenolpyruvate-dependent sugar phosphotransferase system (PTS), a major carbohydrate active transport system, catalyzes the phosphorylation of incoming sugar substrates concomitant with their translocation across the cell membrane. The enzyme II SorABCD PTS system is involved in L-sorbose transport. In Lacticaseibacillus casei (Lactobacillus casei), this protein is PTS system sorbose-specific EIIC component.